We begin with the raw amino-acid sequence, 237 residues long: uncharacterized protein (237 aa).

Positions 1-28 (MNRPLLSVAGSLFVAAWALYIFSCFQHG) are cleaved as a signal peptide. The tract at residues 52–96 (NARDTAAHPSDTADNTSGSSTTTDPRSHGNAPPAPVGGAAQTHTQ) is disordered. A compositionally biased stretch (polar residues) spans 63-75 (TADNTSGSSTTTD).

This is an uncharacterized protein from Treponema pallidum (strain Nichols).